The chain runs to 1256 residues: Splicing factor, arginine/serine-rich 19 (1256 aa).

Disordered regions lie at residues Met-1 to Ala-33, Gly-158 to Arg-343, Ala-371 to Glu-395, Pro-408 to Pro-1030, Gly-1112 to Leu-1152, and Phe-1221 to Leu-1256. Residues Ser-7–Pro-27 are compositionally biased toward basic and acidic residues. The span at Ser-192 to Ser-206 shows a compositional bias: low complexity. The segment covering Pro-207–Pro-222 has biased composition (pro residues). A compositionally biased stretch (basic and acidic residues) spans Asp-227–Asp-236. Residue Ser-240 is modified to Phosphoserine. Over residues Thr-255–Thr-265 the composition is skewed to polar residues. Acidic residues predominate over residues Pro-268–Gly-282. Phosphothreonine is present on Thr-328. Residues Pro-382–Glu-393 show a composition bias toward acidic residues. Low complexity predominate over residues Pro-412–Pro-424. Phosphoserine is present on residues Ser-442 and Ser-447. Residues Lys-478–Gln-489 are compositionally biased toward basic residues. Phosphoserine occurs at positions 491, 493, 510, 518, and 520. Composition is skewed to basic residues over residues Thr-538–Ser-553 and Arg-560–Ser-577. A phosphoserine mark is found at Ser-577 and Ser-579. The span at Arg-592–Arg-611 shows a compositional bias: basic residues. Positions Ser-612–Lys-623 are enriched in basic and acidic residues. The residue at position 663 (Thr-663) is a Phosphothreonine. 2 positions are modified to phosphoserine: Ser-676 and Ser-682. The residue at position 689 (Tyr-689) is a Phosphotyrosine. Ser-691 and Ser-695 each carry phosphoserine. 2 stretches are compositionally biased toward basic and acidic residues: residues Ala-696–Arg-709 and Ser-719–Ser-741. Low complexity-rich tracts occupy residues Pro-752 to Ser-775 and Ser-793 to Ser-804. A Glycyl lysine isopeptide (Lys-Gly) (interchain with G-Cter in SUMO2) cross-link involves residue Lys-812. Residues Phe-813–Pro-831 show a composition bias toward basic and acidic residues. Ser-819 and Ser-821 each carry phosphoserine. Positions Lys-843–Arg-875 are enriched in basic residues. Ser-876, Ser-883, Ser-910, and Ser-912 each carry phosphoserine. A compositionally biased stretch (pro residues) spans Ser-922–Leu-935. 2 positions are modified to phosphothreonine: Thr-923 and Thr-936. The span at Asp-938–Lys-947 shows a compositional bias: polar residues. Ser-939 carries the post-translational modification Phosphoserine. Thr-948 is modified (phosphothreonine). Positions Glu-969–Gln-984 are enriched in acidic residues. Over residues Gln-985–Gly-1017 the composition is skewed to low complexity. Residues Pro-1131–Leu-1256 are necessary for interaction with the CTD domain of POLR2A. Basic and acidic residues predominate over residues Ser-1133–Leu-1152. Residues Pro-1244–Leu-1256 are compositionally biased toward pro residues.

This sequence belongs to the splicing factor SR family. In terms of assembly, interacts with POLR2A.

It is found in the nucleus. Functionally, may function in pre-mRNA splicing. The protein is Splicing factor, arginine/serine-rich 19 (Scaf1) of Mus musculus (Mouse).